We begin with the raw amino-acid sequence, 623 residues long: Chaperone protein HtpG (623 aa).

The segment at 1-336 (MVSKQQTMGF…ASDLPLNISR (336 aa)) is a; substrate-binding. Positions 337 to 550 (EILQDNKQVE…EQDMGLEMQR (214 aa)) are b. The c stretch occupies residues 551–623 (ILQAAGQQIP…NRVNRLLVSS (73 aa)).

Belongs to the heat shock protein 90 family. As to quaternary structure, homodimer.

The protein localises to the cytoplasm. Functionally, molecular chaperone. Has ATPase activity. The polypeptide is Chaperone protein HtpG (Legionella pneumophila (strain Lens)).